We begin with the raw amino-acid sequence, 747 residues long: DNA damage checkpoint protein LCD1 (747 aa).

A phosphoserine mark is found at Ser10, Ser11, and Ser76. Residues 62-139 (NQLVNQLNKA…MEARGKSKRE (78 aa)) adopt a coiled-coil conformation. Positions 145–180 (KPPSTTLSTNTNTITPDSSSVAIEAKPQSPQSKKRK) are disordered. Residues 146–160 (PPSTTLSTNTNTITP) show a composition bias toward low complexity.

Forms a complex with MEC1. Post-translationally, phosphorylated by MEC1 in a cell cycle dependent manner and in response to DNA damage.

It is found in the cytoplasm. The protein resides in the nucleus. Functionally, forms a complex with the serine/threonine kinase MEC1 which activates checkpoint signaling upon genotoxic stresses. The MEC1-LCD1 complex is recruited by the single-strand-binding protein complex RPA to DNA lesions in order to initiate the DNA repair by homologous recombination, after the MRX-complex and TEL1 are displaced. Required for the recruitment of MEC1 to DNA lesions, the activation of CHK1 and RAD53 kinases and phosphorylation of RAD9 in response to DNA damage. Required for cell growth and meiotic recombination. The polypeptide is DNA damage checkpoint protein LCD1 (LCD1) (Saccharomyces cerevisiae (strain ATCC 204508 / S288c) (Baker's yeast)).